Here is a 261-residue protein sequence, read N- to C-terminus: Imidazole glycerol phosphate synthase subunit HisF (261 aa).

Residues D16 and D135 contribute to the active site.

It belongs to the HisA/HisF family. In terms of assembly, heterodimer of HisH and HisF.

The protein localises to the cytoplasm. The catalysed reaction is 5-[(5-phospho-1-deoxy-D-ribulos-1-ylimino)methylamino]-1-(5-phospho-beta-D-ribosyl)imidazole-4-carboxamide + L-glutamine = D-erythro-1-(imidazol-4-yl)glycerol 3-phosphate + 5-amino-1-(5-phospho-beta-D-ribosyl)imidazole-4-carboxamide + L-glutamate + H(+). The protein operates within amino-acid biosynthesis; L-histidine biosynthesis; L-histidine from 5-phospho-alpha-D-ribose 1-diphosphate: step 5/9. Functionally, IGPS catalyzes the conversion of PRFAR and glutamine to IGP, AICAR and glutamate. The HisF subunit catalyzes the cyclization activity that produces IGP and AICAR from PRFAR using the ammonia provided by the HisH subunit. This Mycobacterium ulcerans (strain Agy99) protein is Imidazole glycerol phosphate synthase subunit HisF.